The primary structure comprises 102 residues: Malonate decarboxylase acyl carrier protein (102 aa).

O-(phosphoribosyl dephospho-coenzyme A)serine is present on serine 27.

It belongs to the MdcC family. Post-translationally, covalently binds the prosthetic group of malonate decarboxylase.

The protein localises to the cytoplasm. In terms of biological role, subunit of malonate decarboxylase, it is an acyl carrier protein to which acetyl and malonyl thioester residues are bound via a 2'-(5''-phosphoribosyl)-3'-dephospho-CoA prosthetic group and turn over during the catalytic mechanism. The polypeptide is Malonate decarboxylase acyl carrier protein (Acinetobacter calcoaceticus).